The sequence spans 172 residues: Small ribosomal subunit protein uS5 (172 aa).

The S5 DRBM domain occupies 11 to 74 (LFESVVDIAR…RKAKGAMIRF (64 aa)).

This sequence belongs to the universal ribosomal protein uS5 family. In terms of assembly, part of the 30S ribosomal subunit. Contacts proteins S4 and S8.

Functionally, with S4 and S12 plays an important role in translational accuracy. In terms of biological role, located at the back of the 30S subunit body where it stabilizes the conformation of the head with respect to the body. The sequence is that of Small ribosomal subunit protein uS5 from Neorickettsia sennetsu (strain ATCC VR-367 / Miyayama) (Ehrlichia sennetsu).